The sequence spans 229 residues: 2-C-methyl-D-erythritol 4-phosphate cytidylyltransferase (229 aa).

It belongs to the IspD/TarI cytidylyltransferase family. IspD subfamily.

It catalyses the reaction 2-C-methyl-D-erythritol 4-phosphate + CTP + H(+) = 4-CDP-2-C-methyl-D-erythritol + diphosphate. The protein operates within isoprenoid biosynthesis; isopentenyl diphosphate biosynthesis via DXP pathway; isopentenyl diphosphate from 1-deoxy-D-xylulose 5-phosphate: step 2/6. In terms of biological role, catalyzes the formation of 4-diphosphocytidyl-2-C-methyl-D-erythritol from CTP and 2-C-methyl-D-erythritol 4-phosphate (MEP). This is 2-C-methyl-D-erythritol 4-phosphate cytidylyltransferase from Neisseria gonorrhoeae (strain NCCP11945).